Here is a 271-residue protein sequence, read N- to C-terminus: Cyanophycinase (271 aa).

Catalysis depends on charge relay system residues Ser-132, His-174, and Glu-201.

This sequence belongs to the peptidase S51 family. As to quaternary structure, homodimer.

The enzyme catalyses [L-4-(L-arginin-2-N-yl)aspartate](n) + H2O = [L-4-(L-arginin-2-N-yl)aspartate](n-1) + L-4-(L-arginin-2-N-yl)aspartate. Functionally, exopeptidase that catalyzes the hydrolytic cleavage of multi-L-arginyl-poly-L-aspartic acid (cyanophycin; a water-insoluble reserve polymer) into aspartate-arginine dipeptides. The polypeptide is Cyanophycinase (cphB) (Synechocystis sp. (strain ATCC 27184 / PCC 6803 / Kazusa)).